The chain runs to 432 residues: Trigger factor (432 aa).

The PPIase FKBP-type domain occupies 161–246 (EDRVTIDFTG…LKKVEERELP (86 aa)).

This sequence belongs to the FKBP-type PPIase family. Tig subfamily. In terms of assembly, homodimer and monomer. In vivo most of the ribosomes are in complex with monomeric TF. Uncomplexed TF, however, is in a monomer-dimer equilibrium with approximately two thirds of TF existing in a dimeric state.

The protein localises to the cytoplasm. It carries out the reaction [protein]-peptidylproline (omega=180) = [protein]-peptidylproline (omega=0). Functionally, involved in protein export. Acts as a chaperone by maintaining the newly synthesized protein in an open conformation. Functions as a peptidyl-prolyl cis-trans isomerase. This chain is Trigger factor, found in Shigella boydii serotype 18 (strain CDC 3083-94 / BS512).